A 505-amino-acid polypeptide reads, in one-letter code: ATP synthase subunit alpha (505 aa).

171–178 (GDRQTGKT) is an ATP binding site.

It belongs to the ATPase alpha/beta chains family. F-type ATPases have 2 components, CF(1) - the catalytic core - and CF(0) - the membrane proton channel. CF(1) has five subunits: alpha(3), beta(3), gamma(1), delta(1), epsilon(1). CF(0) has three main subunits: a(1), b(2) and c(9-12). The alpha and beta chains form an alternating ring which encloses part of the gamma chain. CF(1) is attached to CF(0) by a central stalk formed by the gamma and epsilon chains, while a peripheral stalk is formed by the delta and b chains.

The protein localises to the cell inner membrane. It carries out the reaction ATP + H2O + 4 H(+)(in) = ADP + phosphate + 5 H(+)(out). Functionally, produces ATP from ADP in the presence of a proton gradient across the membrane. The alpha chain is a regulatory subunit. The polypeptide is ATP synthase subunit alpha (Campylobacter curvus (strain 525.92)).